The chain runs to 480 residues: Uridine 5'-monophosphate synthase (480 aa).

A2 carries the post-translational modification N-acetylalanine. The OPRTase stretch occupies residues 2–214 (AVARAALGPL…VFVAANHNGS (213 aa)). Y37 carries the post-translational modification Phosphotyrosine. S214 is modified (phosphoserine). The interval 215–220 (PLSIKE) is domain linker. Residues 221–480 (APKELSFGAR…WEAYLSRLGV (260 aa)) form an OMPdecase region. S257 is a binding site for orotidine 5'-phosphate. Residues S257, D259, and 281–283 (KTH) contribute to the UMP site. K281 contacts orotidine 5'-phosphate. Active-site for OMPdecase activity residues include D312, K314, and D317. Residues K314, D317, T321, S372, 430 to 432 (QQY), and 450 to 451 (GR) each bind orotidine 5'-phosphate. Residues D317, T321, S372, 430-432 (QQY), and 450-451 (GR) contribute to the UMP site.

This sequence in the N-terminal section; belongs to the purine/pyrimidine phosphoribosyltransferase family. It in the C-terminal section; belongs to the OMP decarboxylase family. As to quaternary structure, homodimer; dimerization is required for enzymatic activity.

The enzyme catalyses orotidine 5'-phosphate + diphosphate = orotate + 5-phospho-alpha-D-ribose 1-diphosphate. It carries out the reaction orotidine 5'-phosphate + H(+) = UMP + CO2. It participates in pyrimidine metabolism; UMP biosynthesis via de novo pathway; UMP from orotate: step 1/2. It functions in the pathway pyrimidine metabolism; UMP biosynthesis via de novo pathway; UMP from orotate: step 2/2. In terms of biological role, bifunctional enzyme catalyzing the last two steps of de novo pyrimidine biosynthesis, orotate phosphoribosyltransferase (OPRT), which converts orotate to orotidine-5'-monophosphate (OMP), and orotidine-5'-monophosphate decarboxylase (ODC), the terminal enzymatic reaction that decarboxylates OMP to uridine monophosphate (UMP). This Homo sapiens (Human) protein is Uridine 5'-monophosphate synthase.